A 206-amino-acid polypeptide reads, in one-letter code: Imidazole glycerol phosphate synthase subunit HisH (206 aa).

A Glutamine amidotransferase type-1 domain is found at 5-206 (SVVVLDYGSG…AVLRNWIERL (202 aa)). Catalysis depends on Cys-83, which acts as the Nucleophile. Residues His-187 and Glu-189 contribute to the active site.

In terms of assembly, heterodimer of HisH and HisF.

The protein localises to the cytoplasm. It carries out the reaction 5-[(5-phospho-1-deoxy-D-ribulos-1-ylimino)methylamino]-1-(5-phospho-beta-D-ribosyl)imidazole-4-carboxamide + L-glutamine = D-erythro-1-(imidazol-4-yl)glycerol 3-phosphate + 5-amino-1-(5-phospho-beta-D-ribosyl)imidazole-4-carboxamide + L-glutamate + H(+). It catalyses the reaction L-glutamine + H2O = L-glutamate + NH4(+). The protein operates within amino-acid biosynthesis; L-histidine biosynthesis; L-histidine from 5-phospho-alpha-D-ribose 1-diphosphate: step 5/9. In terms of biological role, IGPS catalyzes the conversion of PRFAR and glutamine to IGP, AICAR and glutamate. The HisH subunit catalyzes the hydrolysis of glutamine to glutamate and ammonia as part of the synthesis of IGP and AICAR. The resulting ammonia molecule is channeled to the active site of HisF. In Mycolicibacterium paratuberculosis (strain ATCC BAA-968 / K-10) (Mycobacterium paratuberculosis), this protein is Imidazole glycerol phosphate synthase subunit HisH.